The chain runs to 396 residues: Succinyl-diaminopimelate desuccinylase (396 aa).

Position 74 (His-74) interacts with Zn(2+). The active site involves Asp-76. Position 107 (Asp-107) interacts with Zn(2+). The active-site Proton acceptor is the Glu-142. Residues Glu-143, Glu-171, and His-360 each coordinate Zn(2+).

The protein belongs to the peptidase M20A family. DapE subfamily. Homodimer. Zn(2+) serves as cofactor. Requires Co(2+) as cofactor.

It catalyses the reaction N-succinyl-(2S,6S)-2,6-diaminopimelate + H2O = (2S,6S)-2,6-diaminopimelate + succinate. The protein operates within amino-acid biosynthesis; L-lysine biosynthesis via DAP pathway; LL-2,6-diaminopimelate from (S)-tetrahydrodipicolinate (succinylase route): step 3/3. Its function is as follows. Catalyzes the hydrolysis of N-succinyl-L,L-diaminopimelic acid (SDAP), forming succinate and LL-2,6-diaminopimelate (DAP), an intermediate involved in the bacterial biosynthesis of lysine and meso-diaminopimelic acid, an essential component of bacterial cell walls. The chain is Succinyl-diaminopimelate desuccinylase from Methylobacterium nodulans (strain LMG 21967 / CNCM I-2342 / ORS 2060).